The sequence spans 188 residues: Photosystem I assembly protein Ycf4 (188 aa).

The next 2 helical transmembrane spans lie at 26 to 46 (YFWA…GLSS) and 68 to 88 (LVMG…WFVI).

It belongs to the Ycf4 family.

The protein resides in the cellular thylakoid membrane. Its function is as follows. Seems to be required for the assembly of the photosystem I complex. This chain is Photosystem I assembly protein Ycf4, found in Synechococcus elongatus (strain ATCC 33912 / PCC 7942 / FACHB-805) (Anacystis nidulans R2).